Here is a 497-residue protein sequence, read N- to C-terminus: Zinc finger CCCH domain-containing protein 22 (497 aa).

The C3H1-type zinc finger occupies 136-163 (SESMMICKFFMQQRCRFGSSCRSSHGLD). The disordered stretch occupies residues 236-281 (AQMTDDDGEEEEEEDEQQSASDSEDSVSSDYDEGSPQGIGFLESTN). Residues 239-268 (TDDDGEEEEEEDEQQSASDSEDSVSSDYDE) are compositionally biased toward acidic residues. Residues 300-346 (TRGIASKMMASMGYREGMGLGVSGQGILNPILVKVLPAKRSLDYALE) form the G-patch domain. Residues 352-387 (ECKSEKQKKKRSRGGKRKRGKKFAEAAKAAKQEEES) are disordered. A compositionally biased stretch (basic residues) spans 357-372 (KQKKKRSRGGKRKRGK). Residues 373 to 387 (KFAEAAKAAKQEEES) show a composition bias toward basic and acidic residues.

The protein is Zinc finger CCCH domain-containing protein 22 of Arabidopsis thaliana (Mouse-ear cress).